A 371-amino-acid polypeptide reads, in one-letter code: Aminomethyltransferase (371 aa).

This sequence belongs to the GcvT family. In terms of assembly, the glycine cleavage system is composed of four proteins: P, T, L and H.

The enzyme catalyses N(6)-[(R)-S(8)-aminomethyldihydrolipoyl]-L-lysyl-[protein] + (6S)-5,6,7,8-tetrahydrofolate = N(6)-[(R)-dihydrolipoyl]-L-lysyl-[protein] + (6R)-5,10-methylene-5,6,7,8-tetrahydrofolate + NH4(+). Functionally, the glycine cleavage system catalyzes the degradation of glycine. This Leptospira borgpetersenii serovar Hardjo-bovis (strain JB197) protein is Aminomethyltransferase.